Reading from the N-terminus, the 1055-residue chain is DIS3-like exonuclease 2 (1055 aa).

2 disordered regions span residues 1–109 (MKSA…SSPE) and 229–249 (SAAK…KARQ). Residues 17–32 (HKKKRNRPQKQNRRSK) show a composition bias toward basic residues. Residues 39-59 (EDAHVEESLDGRDSSRSKAKD) are compositionally biased toward basic and acidic residues. Over residues 97–108 (PRRSASPLLSSP) the composition is skewed to low complexity. 2 residues coordinate Mg(2+): Asp-488 and Asp-497.

Belongs to the RNR ribonuclease family. DIS3L2 subfamily. It depends on Mg(2+) as a cofactor. The cofactor is Mn(2+). Widely expressed.

It localises to the cytoplasm. The protein localises to the P-body. In terms of biological role, 3'-5'-exoribonuclease that specifically recognizes RNAs polyuridylated at their 3' end and mediates their degradation. Component of an exosome-independent RNA degradation pathway that mediates degradation of cytoplasmic mRNAs that have been deadenylated and subsequently uridylated at their 3'. The sequence is that of DIS3-like exonuclease 2 (SOV) from Arabidopsis thaliana (Mouse-ear cress).